The chain runs to 1011 residues: Retinoblastoma-related protein (1011 aa).

The disordered stretch occupies residues 1–22; it reads MSQASVDMEDVKPSISLPSDDG. A domain A region spans residues 411-612; the sequence is TPVSTAMTTA…ERGSSMYNSL (202 aa). The segment at 411-860 is pocket; sequence TPVSTAMTTA…NEVFIPSVKP (450 aa). Residues 613–729 are spacer; the sequence is IVARPTLAAE…PAGGGETCAE (117 aa). Positions 730 to 860 are domain B; it reads TGINIFFNKI…NEVFIPSVKP (131 aa). The tract at residues 872-903 is disordered; that stretch reads QKSKSSPEDSNNADSQIPGSPRLSPFPNLPDM. Residues 873 to 889 are compositionally biased toward polar residues; it reads KSKSSPEDSNNADSQIP.

Belongs to the retinoblastoma protein (RB) family.

The protein localises to the nucleus. Functionally, regulator of biological processes that recruits a histone deacetylase to control gene transcription. May play a role in the entry into mitosis, negatively regulating the cell proliferation. Formation of stable complexes with geminiviridae replication-associated proteins may create a cellular environment which favors viral DNA replication. The chain is Retinoblastoma-related protein (Rb1) from Cocos nucifera (Coconut palm).